Reading from the N-terminus, the 732-residue chain is MYPADLLASPDLLEPLRFQTRGGVTVTRRATALDPRTALDPVIDALDRRRGLLLSSGVEAPGRYRRHALGFTDPAVALTARGRTLRIDALNGRGQVLLPAVAEALRGLEALAGLEEAPSRVTASSASPAPLPGEERSRQPSVFSVLRAVLDLFAAPDDPLLGLYGAFAYDLAFQFEPIRQRLERPDDQRDLLLYLPDRLVALDPIAGLARLVAYEFITAAGSTEGLECGGRDHPYRPDTNAEAGCDHAPGDYQRVVESAKAAFRRGDLFEVVPGQTFAEPCADAPSSVFRRLRAANPAPYEAFVNLGRGEFLVAASPEMYVRVAGGRVETCPISGTVARGADALGDAAQVLRLLTSAKDAAELTMCTDVDRNDKARVCEPGSVRVIGRRMIELYSRLIHTVDHVEGRLRSGMDALDAFLTHSWAVTVTGAPKRWAMQFLEDTEQSPRRWYGGAFGRLGFDGGMDTGLTLRTIRMAEGVAYVRAGATLLSDSDPDAEDAECRLKAAAFRDAIRGTAAGAAPTLPAAPRGGEGRRVLLVDHDDSFVHTLADYLRQTGASVTTLRHSHARAALAERRPDLVVLSPGPGRPADFDVAGTIDAALALGLPVFGVCLGLQGMVERFGGALDVLPEPVHGKATEVRVLGGALFAGLPERLTVGRYHSLVARRDRLPADLTVTAETADGLVMAVEHRRLPLAAVQFHPESILSLDGGAGLALLGNVMDRLAAGALTDAAA.

The region spanning 533-728 is the Glutamine amidotransferase type-1 domain; it reads RVLLVDHDDS…MDRLAAGALT (196 aa). Residue 583 to 585 participates in L-glutamine binding; it reads GPG. The active-site Nucleophile; for GATase activity is cysteine 610. L-glutamine contacts are provided by residues glutamine 614 and 660–661; that span reads SL. Active-site for GATase activity residues include histidine 699 and glutamate 701.

The catalysed reaction is chorismate + L-glutamine = anthranilate + pyruvate + L-glutamate + H(+). Its pathway is amino-acid biosynthesis; L-tryptophan biosynthesis; L-tryptophan from chorismate: step 1/5. This is Anthranilate synthase (trpE(G)) from Azospirillum brasilense.